Consider the following 668-residue polypeptide: Protein PLASTID TRANSCRIPTIONALLY ACTIVE 10 (668 aa).

Residues 1-40 (MQICQTKLNFTFPNPTNPNFCKPKALQWSPPRRISLLPCR) constitute a chloroplast transit peptide. Positions 272–340 (GMVCEGTVTT…YRFRFPLELR (69 aa)) constitute an S1 motif domain. A compositionally biased stretch (basic and acidic residues) spans 362 to 391 (RDGDTNPDEIRRDCGRPPEPRKDPGSKPEE). The disordered stretch occupies residues 362-394 (RDGDTNPDEIRRDCGRPPEPRKDPGSKPEEEGL). Ser-434 carries the phosphoserine modification. Positions 611-668 (KRKEGSTLASQEEETESEEEEEDDDDFDDFDYSILSDESSIGYSEQQPLVNGTQVLTD) are disordered. Over residues 621–641 (QEEETESEEEEEDDDDFDDFD) the composition is skewed to acidic residues. A compositionally biased stretch (polar residues) spans 646–668 (SDESSIGYSEQQPLVNGTQVLTD).

Component of the transcriptionally active chromosome (TAC) complexes. Interacts with PTAC7.

Its subcellular location is the plastid. It is found in the chloroplast. The chain is Protein PLASTID TRANSCRIPTIONALLY ACTIVE 10 from Arabidopsis thaliana (Mouse-ear cress).